The following is a 196-amino-acid chain: Thymidine kinase (196 aa).

Residues 9 to 16 (GTMNSGKS) and 85 to 88 (DEAQ) each bind ATP. E86 (proton acceptor) is an active-site residue. The Zn(2+) site is built by C143, C146, C180, and H183.

The protein belongs to the thymidine kinase family. As to quaternary structure, homotetramer.

It localises to the cytoplasm. It carries out the reaction thymidine + ATP = dTMP + ADP + H(+). The polypeptide is Thymidine kinase (Streptococcus thermophilus (strain CNRZ 1066)).